A 276-amino-acid chain; its full sequence is Large ribosomal subunit protein uL2 (276 aa).

The disordered stretch occupies residues tryptophan 213–threonine 264.

It belongs to the universal ribosomal protein uL2 family. Part of the 50S ribosomal subunit. Forms a bridge to the 30S subunit in the 70S ribosome.

In terms of biological role, one of the primary rRNA binding proteins. Required for association of the 30S and 50S subunits to form the 70S ribosome, for tRNA binding and peptide bond formation. It has been suggested to have peptidyltransferase activity; this is somewhat controversial. Makes several contacts with the 16S rRNA in the 70S ribosome. The protein is Large ribosomal subunit protein uL2 of Granulibacter bethesdensis (strain ATCC BAA-1260 / CGDNIH1).